A 178-amino-acid polypeptide reads, in one-letter code: Transcription termination/antitermination protein NusG (178 aa).

A KOW domain is found at 130-159 (SVKVKEGPFANFIGTIEEIQLDKRKLKVHV).

The protein belongs to the NusG family.

In terms of biological role, participates in transcription elongation, termination and antitermination. In Halalkalibacterium halodurans (strain ATCC BAA-125 / DSM 18197 / FERM 7344 / JCM 9153 / C-125) (Bacillus halodurans), this protein is Transcription termination/antitermination protein NusG.